The primary structure comprises 101 residues: DNA-binding protein TubR (101 aa).

In terms of assembly, homodimer. Dimers bind to DNA, forming a protein-bound filament which may form a helix around the TubZ filament.

Its function is as follows. A DNA-binding protein that is part of the type III plasmid partition system used to ensure correct segregation of the pBM400 plasmid. Binds the plasmid origin of replication, probably cooperatively, forming a ring or short helix with external DNA. Its effect on RNA expression has not been shown. The protein is DNA-binding protein TubR of Priestia megaterium (strain ATCC 12872 / QMB1551) (Bacillus megaterium).